Here is a 339-residue protein sequence, read N- to C-terminus: UDP-glucose 4-epimerase (339 aa).

NAD(+)-binding positions include 12 to 13 (FI), 32 to 37 (DNLCNS), 59 to 60 (DI), 81 to 85 (FAGLK), Asn-100, Ser-125, Tyr-150, Lys-154, and Phe-179. Substrate is bound by residues Ser-125 and Tyr-150. Residue Tyr-150 is the Proton acceptor of the active site. Substrate-binding positions include Asn-180, 200 to 201 (NL), 217 to 219 (AVF), Arg-232, and 293 to 296 (RAGD).

This sequence belongs to the NAD(P)-dependent epimerase/dehydratase family. Homodimer. NAD(+) serves as cofactor.

It catalyses the reaction UDP-alpha-D-glucose = UDP-alpha-D-galactose. The protein operates within carbohydrate metabolism; galactose metabolism. Functionally, involved in the metabolism of galactose. Plays an essential role in the incorporation of galactose into meningococcal lipopolysaccharide surface molecules, which are important for pathogenesis. Catalyzes the conversion of UDP-galactose (UDP-Gal) to UDP-glucose (UDP-Glc) through a mechanism involving the transient reduction of NAD. This chain is UDP-glucose 4-epimerase (galE), found in Neisseria meningitidis serogroup B (strain ATCC BAA-335 / MC58).